We begin with the raw amino-acid sequence, 148 residues long: MATLLVLHGPNLNLLGTREPDKYGATTLAEINQDLERRAREGGHHLLHLQSNAEYELIERIHAAKSEGVDFILINPAAFTHTSVALRDALLAVSIPFIEVHLSNVHKREPFRHHSYFSDVAVGVICGLGASGYRLALEAALEQLTGRA.

Residue tyrosine 23 is the Proton acceptor of the active site. Substrate-binding residues include asparagine 75, histidine 81, and aspartate 88. Catalysis depends on histidine 101, which acts as the Proton donor. Substrate-binding positions include 102–103 (LS) and arginine 112.

The protein belongs to the type-II 3-dehydroquinase family. As to quaternary structure, homododecamer.

The catalysed reaction is 3-dehydroquinate = 3-dehydroshikimate + H2O. The protein operates within metabolic intermediate biosynthesis; chorismate biosynthesis; chorismate from D-erythrose 4-phosphate and phosphoenolpyruvate: step 3/7. Functionally, catalyzes a trans-dehydration via an enolate intermediate. This Ectopseudomonas mendocina (strain ymp) (Pseudomonas mendocina) protein is 3-dehydroquinate dehydratase.